The chain runs to 1401 residues: MAP kinase kinase kinase wis4 (1401 aa).

2 disordered regions span residues 67–99 (HIPL…MSYT) and 176–205 (QDSI…NDFS). Polar residues-rich tracts occupy residues 72–99 (PSHS…MSYT) and 176–191 (QDSI…NQSL). Residues 1037-1306 (WQQGHFVRSG…AVDLLTHPWI (270 aa)) form the Protein kinase domain. Residues 1043-1051 (VRSGMFGDV) and lysine 1066 contribute to the ATP site. The active-site Proton acceptor is the aspartate 1161.

The protein belongs to the protein kinase superfamily. STE Ser/Thr protein kinase family. MAP kinase kinase kinase subfamily.

It catalyses the reaction L-seryl-[protein] + ATP = O-phospho-L-seryl-[protein] + ADP + H(+). The catalysed reaction is L-threonyl-[protein] + ATP = O-phospho-L-threonyl-[protein] + ADP + H(+). Its function is as follows. Involved in a signal transduction pathway that is activated in under conditions of heat shock, oxidative stress or limited nutrition. Unlike win1, it is not activated by changes in the osmolarity of the extracellular environment. Activates the wis1 MAP kinase kinase by phosphorylation. This is MAP kinase kinase kinase wis4 (wis4) from Schizosaccharomyces pombe (strain 972 / ATCC 24843) (Fission yeast).